Reading from the N-terminus, the 417-residue chain is Phosphoglycerate kinase 2 (417 aa).

Ser-2 carries the N-acetylserine modification. 2 positions are modified to phosphoserine: Ser-2 and Ser-4. The residue at position 11 (Lys-11) is an N6-acetyllysine. Val-23, Asp-24, Phe-25, Asn-26, Gln-38, and Arg-39 together coordinate (2R)-3-phosphoglycerate. Lys-48 carries the post-translational modification N6-acetyllysine. (2R)-3-phosphoglycerate-binding residues include Ser-62, His-63, Gly-65, and Arg-66. Residues Lys-75, Lys-86, and Lys-97 each carry the N6-acetyllysine modification. (2R)-3-phosphoglycerate is bound by residues Leu-122 and Arg-123. Residues Lys-131 and Lys-146 each carry the N6-acetyllysine modification. Residues His-170 and Arg-171 each contribute to the (2R)-3-phosphoglycerate site. Tyr-196 is subject to Phosphotyrosine. Position 199 is an N6-acetyllysine (Lys-199). Gly-214 lines the ADP pocket. Residue Gly-214 participates in CDP binding. AMP-binding residues include Ala-215 and Lys-216. Ala-215 lines the ATP pocket. Residue Ala-215 participates in Mg(2+) binding. Residues Ala-218 and Asp-219 each contribute to the Mg(2+) site. Asp-219 contacts CDP. Lys-220 contacts AMP. Lys-220 contributes to the ATP binding site. Gly-238 serves as a coordination point for ADP. CDP is bound at residue Gly-238. Gly-239 is an AMP binding site. Residue Gly-239 coordinates ATP. Residues Lys-267 and Lys-291 each carry the N6-acetyllysine modification. Position 313 (Gly-313) interacts with AMP. Residue Gly-313 participates in ATP binding. Positions 338 and 343 each coordinate CDP. ADP is bound at residue Phe-343. Glu-344 contributes to the AMP binding site. Residues Glu-344, Asp-375, and Thr-376 each contribute to the ATP site. A Mg(2+)-binding site is contributed by Asp-375.

It belongs to the phosphoglycerate kinase family. In terms of assembly, monomer. It depends on Mg(2+) as a cofactor.

The protein localises to the cytoplasm. The enzyme catalyses (2R)-3-phosphoglycerate + ATP = (2R)-3-phospho-glyceroyl phosphate + ADP. The protein operates within carbohydrate degradation; glycolysis; pyruvate from D-glyceraldehyde 3-phosphate: step 2/5. In terms of biological role, essential for sperm motility and male fertility but is not required for the completion of spermatogenesis. This is Phosphoglycerate kinase 2 (PGK2) from Macaca fascicularis (Crab-eating macaque).